A 374-amino-acid chain; its full sequence is UPF0674 endoplasmic reticulum membrane protein C2G5.01 (374 aa).

A helical transmembrane segment spans residues 49–68 (FRLEFVILACFFLYVFSFIT). Asn-287 is a glycosylation site (N-linked (GlcNAc...) asparagine). Residues 335 to 374 (KAAKKKVKSSGDISKLSESDQKKRMERERQRKMRRRAKKM) are disordered. The segment covering 349-363 (KLSESDQKKRMERER) has biased composition (basic and acidic residues). Over residues 364-374 (QRKMRRRAKKM) the composition is skewed to basic residues.

Belongs to the UPF0674 family.

The protein resides in the endoplasmic reticulum membrane. This is UPF0674 endoplasmic reticulum membrane protein C2G5.01 from Schizosaccharomyces pombe (strain 972 / ATCC 24843) (Fission yeast).